The sequence spans 2274 residues: Adenomatous polyposis coli protein 2 (2274 aa).

Residues 5 to 59 are a coiled coil; the sequence is MASYEQLVRQVEALKAENTHLRQELRDNSSHLSKLETETSGMKEVLKHLQGKLEQ. 2 disordered regions span residues 97–120 and 248–269; these read GPEP…KDSF and VEEE…QPGN. ARM repeat units lie at residues 301–341, 472–511, 515–555, 557–602, 608–647, and 650–689; these read PESC…GAKD, ANKA…NLSW, INSK…NLSA, STEN…NVSS, EDYR…NLSA, and PRDQ…NLLA. The stretch at 832–856 forms a coiled coil; that stretch reads AAKAKAKLALAVARIDRLVEDISAL. Disordered regions lie at residues 859–901, 1061–1143, and 1165–1216; these read SSDD…GSRA, CSSL…NCVQ, and SIAS…TSQF. Low complexity predominate over residues 861-870; that stretch reads DDSFSLSSGD. Repeat unit 1 spans residues 1049 to 1068; the sequence is LVAQDGPMSLSRCSSLSSLS. The 5 X 20 AA approximate repeat of F-X-V-E-X-T-P-X-C-F-S-R-X-S-S-L-S-S-L-S stretch occupies residues 1049–1565; that stretch reads LVAQDGPMSL…SLTSSASSLS (517 aa). The interaction with CTNNB1 stretch occupies residues 1049–1565; sequence LVAQDGPMSL…SLTSSASSLS (517 aa). Residues 1077-1086 are compositionally biased toward polar residues; that stretch reads QAENLDSDSS. A compositionally biased stretch (low complexity) spans 1092 to 1103; that stretch reads EAGPGEAELGRA. Positions 1133–1143 are enriched in polar residues; it reads TPSSSSENCVQ. Copy 2 of the repeat occupies 1140-1159; that stretch reads NCVQETPLVLSRCSSVSSLG. The stretch at 1250–1269 is repeat 3; the sequence is FTVEKPDENFSCASSLSALA. 6 disordered regions span residues 1290–1323, 1368–1480, 1493–1631, 1699–2003, 2022–2122, and 2135–2274; these read ERAV…SATD, RGDD…LQSL, FYDS…DIRP, STLQ…RGRP, PRQP…IKDE, and TALP…SLLE. The segment covering 1374 to 1397 has biased composition (polar residues); that stretch reads TDSAEGTPVNFSSAASLSDETLQG. The stretch at 1375–1394 is repeat 4; the sequence is DSAEGTPVNFSSAASLSDET. Over residues 1399-1411 the composition is skewed to basic and acidic residues; the sequence is SRDKPAGPGDRQK. Polar residues predominate over residues 1455–1470; that stretch reads RPQSARSNRDSSCQTR. Over residues 1517-1529 the composition is skewed to basic and acidic residues; that stretch reads LKREKPAGRKETP. Copy 5 of the repeat occupies 1546-1565; sequence LIVDETPPCYSLTSSASSLS. Over residues 1556–1574 the composition is skewed to low complexity; the sequence is SLTSSASSLSEPEAPEQPA. Ser1563 and Ser1565 each carry phosphoserine. Over residues 1608–1624 the composition is skewed to basic residues; the sequence is PRRRTQVPGSRRRKPRA. Composition is skewed to low complexity over residues 1780–1795 and 1839–1868; these read SGPC…SGTT and LAKT…TPTG. Residues 1792-1871 are required for localization to microtubules and function in microtubule stabilization; sequence SGTTQPETVT…PLATPTGGPL (80 aa). Residue Ser1861 is modified to Phosphoserine. Pro residues predominate over residues 1910–1921; sequence RVPPPLARPSPE. Composition is skewed to low complexity over residues 1945-1955 and 1983-1997; these read RMASARSSGSE and LSSA…QAAS. Residues 2037–2114 form an interaction with MAPRE1 and MAPRE3 region; sequence GLAPLAPRRT…PLPRVAPPGT (78 aa). Over residues 2165–2179 the composition is skewed to polar residues; it reads DVATSKTNSSTSPSL.

Belongs to the adenomatous polyposis coli (APC) family. Interacts with PSRC1. Interacts with MAPRE3. Interacts with APC, CTNNB1, TP53BP2, MAPRE1 and possibly with AXIN2. In terms of tissue distribution, expressed in brain and other neural tissues.

It localises to the cytoplasm. The protein resides in the cytoskeleton. Its subcellular location is the golgi apparatus. It is found in the perinuclear region. Its function is as follows. Stabilizes microtubules and may regulate actin fiber dynamics through the activation of Rho family GTPases. May also function in Wnt signaling by promoting the rapid degradation of CTNNB1. This chain is Adenomatous polyposis coli protein 2 (Apc2), found in Mus musculus (Mouse).